Here is a 577-residue protein sequence, read N- to C-terminus: 5'-AMP-activated protein kinase subunit gamma (577 aa).

Residues glutamine 45–asparagine 226 are disordered. The span at asparagine 58 to asparagine 88 shows a compositional bias: low complexity. Polar residues-rich tracts occupy residues serine 106–glycine 121 and glutamate 138–methionine 155. The span at serine 165–asparagine 226 shows a compositional bias: low complexity. 4 consecutive CBS domains span residues valine 279–lysine 341, glutamate 364–glutamate 426, isoleucine 438–serine 499, and glutamine 517–serine 574.

The protein belongs to the 5'-AMP-activated protein kinase gamma subunit family.

Functionally, AMPK may be responsible for the regulation of fatty acid synthesis by phosphorylation of acetyl-CoA carboxylase. This chain is 5'-AMP-activated protein kinase subunit gamma (prkag), found in Dictyostelium discoideum (Social amoeba).